We begin with the raw amino-acid sequence, 1060 residues long: Histone lysine demethylase PHF8 (1060 aa).

The PHD-type zinc finger occupies 41 to 92; the sequence is PVYCLCRLPYDVTRFMIECDMCQDWFHGSCVGVEEEKAADIDLYHCPNCEVL. Ser-69 is subject to Phosphoserine; by CDK1. Positions 100-120 are disordered; that stretch reads KRRGSSKGHDTHKGKPVKTGS. Residues 101–115 are linker; sequence RRGSSKGHDTHKGKP. At Ser-120 the chain carries Phosphoserine; by CDK1. In terms of domain architecture, JmjC spans 231 to 387; sequence FSDTRLSNLV…MQLKAYEIEK (157 aa). Thr-280 serves as a coordination point for substrate. 2 residues coordinate Fe cation: His-283 and Asp-285. Position 300 (Lys-300) interacts with substrate. Position 355 (His-355) interacts with Fe cation. Positions 508-517 are enriched in polar residues; the sequence is AHSTSVSMSR. The tract at residues 508-534 is disordered; sequence AHSTSVSMSRLSLPSKNGSKKKGLKPK. At Ser-651 the chain carries Phosphoserine. A Phosphotyrosine modification is found at Tyr-704. Phosphothreonine is present on residues Thr-705 and Thr-706. Position 722 is a phosphoserine (Ser-722). 3 disordered regions span residues 768–840, 852–902, and 915–1046; these read QSSS…EQDS, YPSL…GTRV, and KLAQ…KQRL. 2 stretches are compositionally biased toward low complexity: residues 769–778 and 785–804; these read SSSSSPATSS and GGQDRSSGSSSSGLGTVSNS. Residues Ser-804, Ser-826, Ser-834, Ser-854, Ser-857, and Ser-880 each carry the phosphoserine modification. The span at 826-839 shows a compositional bias: acidic residues; sequence SEEEEENASLDEQD. Basic and acidic residues predominate over residues 891–900; it reads KQDRPVREGT. Residues 924 to 934 are compositionally biased toward basic residues; sequence AQKKKYIKKKP. A compositionally biased stretch (polar residues) spans 1018–1030; the sequence is RRPSVGSQSNQAG.

Belongs to the JHDM1 histone demethylase family. JHDM1D subfamily. Interacts with POLR1B, UBTF, SETD1A, HCFC1, E2F1 and ZNF711. Interacts with ZNF263; recruited to the SIX3 promoter along with other proteins involved in chromatin modification and transcriptional corepression where it contributes to transcriptional repression. Fe(2+) serves as cofactor. Phosphorylation at Ser-69 and Ser-120 are required for dissociation from chromatin and accumulation of H4K20Me1 levels during prophase.

It localises to the nucleus. It is found in the nucleolus. The enzyme catalyses N(6),N(6)-dimethyl-L-lysyl(36)-[histone H3] + 2 2-oxoglutarate + 2 O2 = L-lysyl(36)-[histone H3] + 2 formaldehyde + 2 succinate + 2 CO2. It catalyses the reaction N(6),N(6)-dimethyl-L-lysyl(9)-[histone H3] + 2 2-oxoglutarate + 2 O2 = L-lysyl(9)-[histone H3] + 2 formaldehyde + 2 succinate + 2 CO2. Functionally, histone lysine demethylase with selectivity for the di- and monomethyl states that plays a key role cell cycle progression, rDNA transcription and brain development. Demethylates mono- and dimethylated histone H3 'Lys-9' residue (H3K9Me1 and H3K9Me2), dimethylated H3 'Lys-27' (H3K27Me2) and monomethylated histone H4 'Lys-20' residue (H4K20Me1). Acts as a transcription activator as H3K9Me1, H3K9Me2, H3K27Me2 and H4K20Me1 are epigenetic repressive marks. Involved in cell cycle progression by being required to control G1-S transition. Acts as a coactivator of rDNA transcription, by activating polymerase I (pol I) mediated transcription of rRNA genes. Required for brain development, probably by regulating expression of neuron-specific genes. Only has activity toward H4K20Me1 when nucleosome is used as a substrate and when not histone octamer is used as substrate. May also have weak activity toward dimethylated H3 'Lys-36' (H3K36Me2), however, the relevance of this result remains unsure in vivo. Specifically binds trimethylated 'Lys-4' of histone H3 (H3K4me3), affecting histone demethylase specificity: has weak activity toward H3K9Me2 in absence of H3K4me3, while it has high activity toward H3K9me2 when binding H3K4me3. Positively modulates transcription of histone demethylase KDM5C, acting synergistically with transcription factor ARX; synergy may be related to enrichment of histone H3K4me3 in regulatory elements. The protein is Histone lysine demethylase PHF8 (PHF8) of Homo sapiens (Human).